The primary structure comprises 340 residues: MGGGVSVELPKRDPPPGVPTDEMLLNVDKMHDVIAPAKLLEYVHIGPLAKDKEDKVKKRYPEFRLVNTGPGGLSALLRQSYNGTAPNCCHTFNRTHYWKKDGKISDKYEEGAVLESCWPDVHDTGKCDVNLFDWCQGDTFDRNICHQWIGSAFNRSDRTVEGQQSLINLYNKMQTLCSKDASVPICESFLHHLRAHNTEDSKEMIDYILRQQSANFKQKYMRCSYPTRDKLEESLKYAEPRECWDPECSNANVNFLLTRNYNNLGLCNIVRCNTSVNNLQMDKTSSLRLSCGLSNSDRFSTVPVNRAKVVQHNIKHSFDLKLHLISLLSLLVIWILIVAI.

The tract at residues 1–20 is disordered; it reads MGGGVSVELPKRDPPPGVPT. Glycine 2 carries N-myristoyl glycine; by host lipidation. The Virion surface segment spans residues 2–319; it reads GGGVSVELPK…VQHNIKHSFD (318 aa). Residues 320–340 traverse the membrane as a helical; Signal-anchor for type II membrane protein segment; the sequence is LKLHLISLLSLLVIWILIVAI.

The protein belongs to the orthopoxvirus OPG086 family. As to quaternary structure, interacts with OPG143. Component of the entry fusion complex (EFC) composed of OPG053, OPG076, OPG086, OPG094, OPG095, OPG099, OPG107, OPG143, OPG104, OPG147 and OPG155. Except for OPG095 and OPG053, each of the EFC proteins is required for assembly or stability of the complex. Unglycosylated because produced in viral factories instead of the classic ER -Golgi route.

It localises to the virion membrane. Functionally, component of the entry fusion complex (EFC), which consists of 11 proteins. During cell infection, this complex mediates entry of the virion core into the host cytoplasm by a two-step mechanism consisting of lipid mixing of the viral and cellular membranes and subsequent pore formation. This Variola virus protein is Entry-fusion complex protein OPG094 (OPG094).